A 139-amino-acid polypeptide reads, in one-letter code: Small ribosomal subunit protein uS19 (139 aa).

The protein belongs to the universal ribosomal protein uS19 family.

In terms of biological role, protein S19 forms a complex with S13 that binds strongly to the 16S ribosomal RNA. This chain is Small ribosomal subunit protein uS19, found in Ignicoccus hospitalis (strain KIN4/I / DSM 18386 / JCM 14125).